We begin with the raw amino-acid sequence, 284 residues long: Bifunctional protein FolD (284 aa).

NADP(+) is bound by residues 166-168 (GAS), serine 191, and isoleucine 232.

It belongs to the tetrahydrofolate dehydrogenase/cyclohydrolase family. As to quaternary structure, homodimer.

It catalyses the reaction (6R)-5,10-methylene-5,6,7,8-tetrahydrofolate + NADP(+) = (6R)-5,10-methenyltetrahydrofolate + NADPH. The enzyme catalyses (6R)-5,10-methenyltetrahydrofolate + H2O = (6R)-10-formyltetrahydrofolate + H(+). The protein operates within one-carbon metabolism; tetrahydrofolate interconversion. Its function is as follows. Catalyzes the oxidation of 5,10-methylenetetrahydrofolate to 5,10-methenyltetrahydrofolate and then the hydrolysis of 5,10-methenyltetrahydrofolate to 10-formyltetrahydrofolate. The sequence is that of Bifunctional protein FolD from Neisseria meningitidis serogroup B (strain ATCC BAA-335 / MC58).